A 97-amino-acid polypeptide reads, in one-letter code: Large ribosomal subunit protein uL23 (97 aa).

This sequence belongs to the universal ribosomal protein uL23 family. Part of the 50S ribosomal subunit. Contacts protein L29, and trigger factor when it is bound to the ribosome.

Its function is as follows. One of the early assembly proteins it binds 23S rRNA. One of the proteins that surrounds the polypeptide exit tunnel on the outside of the ribosome. Forms the main docking site for trigger factor binding to the ribosome. The chain is Large ribosomal subunit protein uL23 from Sulfurihydrogenibium sp. (strain YO3AOP1).